The chain runs to 885 residues: Cadherin-related family member 3 (885 aa).

Residues 1 to 19 (MQEAIILLALLGAMSGGEA) form the signal peptide. The Extracellular segment spans residues 20–713 (LHLILLPATG…VYSPSAWYVP (694 aa)). 6 consecutive Cadherin domains span residues 23–132 (ILLP…PPQF), 136–236 (LAEG…VPRF), 237–344 (TSPT…NPAT), 346–466 (QKFT…RPSY), 462–566 (DRPS…KPIC), and 567–695 (TPNS…RPRV). Asparagine 186 and asparagine 257 each carry an N-linked (GlcNAc...) asparagine glycan. N-linked (GlcNAc...) asparagine glycosylation occurs at asparagine 624. A helical membrane pass occupies residues 714–734 (FVITLGSILLLGLLVYLVVLL). At 735–885 (AKAIHRHCPC…RAYPKPHPGK (151 aa)) the chain is on the cytoplasmic side. The disordered stretch occupies residues 808–885 (MPKWKESSHQ…RAYPKPHPGK (78 aa)).

As to quaternary structure, (Microbial infection) Interacts (via N-terminus) with human rhinovirus C capsid proteins VP1, VP2 and VP3. Expressed in bronchial epithelium from adults and in fetal lung tissue.

The protein localises to the cell membrane. Its function is as follows. Cadherins are calcium-dependent cell adhesion proteins. They preferentially interact with themselves in a homophilic manner in connecting cells; cadherins may thus contribute to the sorting of heterogeneous cell types. (Microbial infection) Acts as a receptor for human rhinovirus C. This is Cadherin-related family member 3 (CDHR3) from Homo sapiens (Human).